Consider the following 146-residue polypeptide: Holo-[acyl-carrier-protein] synthase (146 aa).

2 residues coordinate Mg(2+): Asp9 and Glu63.

It belongs to the P-Pant transferase superfamily. AcpS family. Mg(2+) serves as cofactor.

The protein localises to the cytoplasm. The enzyme catalyses apo-[ACP] + CoA = holo-[ACP] + adenosine 3',5'-bisphosphate + H(+). Functionally, transfers the 4'-phosphopantetheine moiety from coenzyme A to a Ser of acyl-carrier-protein. In Burkholderia orbicola (strain MC0-3), this protein is Holo-[acyl-carrier-protein] synthase.